The sequence spans 171 residues: Ribosome maturation factor RimM (171 aa).

The PRC barrel domain maps to 96–170; it reads AEGEYYYHEI…LVTIHVMEGL (75 aa).

It belongs to the RimM family. As to quaternary structure, binds ribosomal protein uS19.

The protein localises to the cytoplasm. Its function is as follows. An accessory protein needed during the final step in the assembly of 30S ribosomal subunit, possibly for assembly of the head region. Essential for efficient processing of 16S rRNA. May be needed both before and after RbfA during the maturation of 16S rRNA. It has affinity for free ribosomal 30S subunits but not for 70S ribosomes. In Bacillus cereus (strain G9842), this protein is Ribosome maturation factor RimM.